A 185-amino-acid polypeptide reads, in one-letter code: Ribosome-recycling factor (185 aa).

This sequence belongs to the RRF family.

It is found in the cytoplasm. Functionally, responsible for the release of ribosomes from messenger RNA at the termination of protein biosynthesis. May increase the efficiency of translation by recycling ribosomes from one round of translation to another. The protein is Ribosome-recycling factor of Beutenbergia cavernae (strain ATCC BAA-8 / DSM 12333 / CCUG 43141 / JCM 11478 / NBRC 16432 / NCIMB 13614 / HKI 0122).